A 376-amino-acid polypeptide reads, in one-letter code: Chaperone protein DnaJ (376 aa).

A J domain is found at 5-70 (DYYEILGVSK…QKRAAYDQYG (66 aa)). The CR-type zinc finger occupies 131-209 (GVTKEIRIPT…CHGHGRVERS (79 aa)). The Zn(2+) site is built by cysteine 144, cysteine 147, cysteine 161, cysteine 164, cysteine 183, cysteine 186, cysteine 197, and cysteine 200. 4 CXXCXGXG motif repeats span residues 144–151 (CDVCHGSG), 161–168 (CPTCHGSG), 183–190 (CPHCQGRG), and 197–204 (CNKCHGHG).

This sequence belongs to the DnaJ family. As to quaternary structure, homodimer. It depends on Zn(2+) as a cofactor.

The protein localises to the cytoplasm. In terms of biological role, participates actively in the response to hyperosmotic and heat shock by preventing the aggregation of stress-denatured proteins and by disaggregating proteins, also in an autonomous, DnaK-independent fashion. Unfolded proteins bind initially to DnaJ; upon interaction with the DnaJ-bound protein, DnaK hydrolyzes its bound ATP, resulting in the formation of a stable complex. GrpE releases ADP from DnaK; ATP binding to DnaK triggers the release of the substrate protein, thus completing the reaction cycle. Several rounds of ATP-dependent interactions between DnaJ, DnaK and GrpE are required for fully efficient folding. Also involved, together with DnaK and GrpE, in the DNA replication of plasmids through activation of initiation proteins. This is Chaperone protein DnaJ from Escherichia coli O157:H7 (strain EC4115 / EHEC).